Here is a 420-residue protein sequence, read N- to C-terminus: Gamma-glutamyl phosphate reductase (420 aa).

This sequence belongs to the gamma-glutamyl phosphate reductase family.

It localises to the cytoplasm. The catalysed reaction is L-glutamate 5-semialdehyde + phosphate + NADP(+) = L-glutamyl 5-phosphate + NADPH + H(+). It participates in amino-acid biosynthesis; L-proline biosynthesis; L-glutamate 5-semialdehyde from L-glutamate: step 2/2. Its function is as follows. Catalyzes the NADPH-dependent reduction of L-glutamate 5-phosphate into L-glutamate 5-semialdehyde and phosphate. The product spontaneously undergoes cyclization to form 1-pyrroline-5-carboxylate. The chain is Gamma-glutamyl phosphate reductase from Streptococcus pneumoniae serotype 4 (strain ATCC BAA-334 / TIGR4).